The following is a 198-amino-acid chain: MNILVIKSSVFGDNGNSSALVNAQVDALKAKHPQATVRVRDLSTDPIPHLDGNRVSAFFTSATQRTDEQQAIDAFSLALIDEIKAADHIVLGLPMYNFGIPSQLKSWIDHVARAGITFRYTEKGPQGLLENKPVTVLAARGGIYAGTSNDTVTPYIKLFFGFIGITDVEFVFAEGLNMGDDVKEKALAVARSELLAST.

FMN is bound by residues Ser9 and 95 to 98; that span reads MYNF.

The protein belongs to the azoreductase type 1 family. Homodimer. It depends on FMN as a cofactor.

The catalysed reaction is 2 a quinone + NADH + H(+) = 2 a 1,4-benzosemiquinone + NAD(+). It carries out the reaction N,N-dimethyl-1,4-phenylenediamine + anthranilate + 2 NAD(+) = 2-(4-dimethylaminophenyl)diazenylbenzoate + 2 NADH + 2 H(+). Functionally, quinone reductase that provides resistance to thiol-specific stress caused by electrophilic quinones. Also exhibits azoreductase activity. Catalyzes the reductive cleavage of the azo bond in aromatic azo compounds to the corresponding amines. The sequence is that of FMN-dependent NADH:quinone oxidoreductase from Alcanivorax borkumensis (strain ATCC 700651 / DSM 11573 / NCIMB 13689 / SK2).